The following is a 173-amino-acid chain: Co-chaperone protein HscB (173 aa).

A J domain is found at 2 to 74 (DYFTLFGLPA…LKRAEYMLSQ (73 aa)).

The protein belongs to the HscB family. As to quaternary structure, interacts with HscA and stimulates its ATPase activity. Interacts with IscU.

Its function is as follows. Co-chaperone involved in the maturation of iron-sulfur cluster-containing proteins. Seems to help targeting proteins to be folded toward HscA. In Xenorhabdus nematophila (strain ATCC 19061 / DSM 3370 / CCUG 14189 / LMG 1036 / NCIMB 9965 / AN6), this protein is Co-chaperone protein HscB.